The primary structure comprises 207 residues: dTTP/UTP pyrophosphatase (207 aa).

Asp79 serves as the catalytic Proton acceptor.

This sequence belongs to the Maf family. YhdE subfamily. It depends on a divalent metal cation as a cofactor.

The protein resides in the cytoplasm. The catalysed reaction is dTTP + H2O = dTMP + diphosphate + H(+). It catalyses the reaction UTP + H2O = UMP + diphosphate + H(+). Functionally, nucleoside triphosphate pyrophosphatase that hydrolyzes dTTP and UTP. May have a dual role in cell division arrest and in preventing the incorporation of modified nucleotides into cellular nucleic acids. This is dTTP/UTP pyrophosphatase from Nitrobacter winogradskyi (strain ATCC 25391 / DSM 10237 / CIP 104748 / NCIMB 11846 / Nb-255).